We begin with the raw amino-acid sequence, 396 residues long: Pinosylvin synthase 2 (396 aa).

Residue 60 to 63 (KFKR) coordinates substrate. Cys-170 is an active-site residue. Residues Leu-273 and 311 to 313 (GGR) contribute to the substrate site.

The protein belongs to the thiolase-like superfamily. Chalcone/stilbene synthases family. As to quaternary structure, homodimer.

It is found in the cytoplasm. The catalysed reaction is (E)-cinnamoyl-CoA + 3 malonyl-CoA + 3 H(+) = (E)-pinosylvin + 4 CO2 + 4 CoA. It carries out the reaction 3-phenylpropanoyl-CoA + 3 malonyl-CoA + 3 H(+) = dihydropinosylvin + 4 CO2 + 4 CoA. It participates in phytoalexin biosynthesis; pinosylvin biosynthesis. In terms of biological role, catalyzes the production of pinosylvin from cinnamoyl-CoA and malonyl-CoA, and dihydropinosylvin from dihydrocinnamoyl-CoA. The polypeptide is Pinosylvin synthase 2 (Pinus strobus (Eastern white pine)).